Here is a 69-residue protein sequence, read N- to C-terminus: Consomatin Be1 (69 aa).

A signal peptide spans 1–22; it reads MEMAYWVMVMMMVWITAPLSEG. The propeptide occupies 23 to 57; it reads GKLNDVIRALAPDDVTPQFILRSLISRRRSDSDVR. At E58 the chain carries 4-carboxyglutamate. A disulfide bridge connects residues C62 and C67. W64 carries the D-tryptophan modification. 2 positions are modified to 4-hydroxyproline: P68 and P69.

It belongs to the conotoxin C superfamily. Consomatin family. In terms of tissue distribution, expressed by the venom duct.

The protein resides in the secreted. In terms of biological role, moderately activates human somatostatin receptors (SSTR) with a preferential activation of SSTR1 and SSTR4. In vivo, does not cause behavioral changes in mice within a few minutes of intracranial injection, but causes a progressive loss of movement thereafter. Four to five hours after injection, mice recover, even with the highest dose tested. Shows antinociception and antihyperalgesia activities in two mouse models of acute pain, most probably by acting outside the central nervous system. The protein is Consomatin Be1 of Conus betulinus (Beech cone).